A 401-amino-acid polypeptide reads, in one-letter code: 8-amino-7-oxononanoate synthase (401 aa).

Arginine 24 serves as a coordination point for substrate. A pyridoxal 5'-phosphate-binding site is contributed by 111–112 (GF). Histidine 137 is a binding site for substrate. 3 residues coordinate pyridoxal 5'-phosphate: serine 183, histidine 211, and threonine 240. At lysine 243 the chain carries N6-(pyridoxal phosphate)lysine. Substrate is bound at residue threonine 357.

Belongs to the class-II pyridoxal-phosphate-dependent aminotransferase family. BioF subfamily. Homodimer. The cofactor is pyridoxal 5'-phosphate.

The enzyme catalyses 6-carboxyhexanoyl-[ACP] + L-alanine + H(+) = (8S)-8-amino-7-oxononanoate + holo-[ACP] + CO2. It functions in the pathway cofactor biosynthesis; biotin biosynthesis. Its function is as follows. Catalyzes the decarboxylative condensation of pimeloyl-[acyl-carrier protein] and L-alanine to produce 8-amino-7-oxononanoate (AON), [acyl-carrier protein], and carbon dioxide. In Xanthomonas oryzae pv. oryzae (strain MAFF 311018), this protein is 8-amino-7-oxononanoate synthase.